Reading from the N-terminus, the 269-residue chain is Regulatory protein RecX (269 aa).

It belongs to the RecX family.

It is found in the cytoplasm. Functionally, modulates RecA activity. The sequence is that of Regulatory protein RecX from Listeria monocytogenes serotype 4b (strain F2365).